The sequence spans 392 residues: ESX-1 secretion-associated protein EspA (392 aa).

Residues 302-392 (TRQALRPRAD…GQKVLVRNVV (91 aa)) form a disordered region. Residues 334-344 (QGMGGPVGMGG) show a composition bias toward gly residues.

As to quaternary structure, homodimer; disulfide-linked.

It localises to the secreted. Functionally, required for secretion of EsxA (ESAT-6) and EsxB (CFP-10) and for virulence. This is ESX-1 secretion-associated protein EspA from Mycobacterium tuberculosis (strain CDC 1551 / Oshkosh).